The following is a 139-amino-acid chain: Putative pre-16S rRNA nuclease (139 aa).

This sequence belongs to the YqgF nuclease family.

The protein resides in the cytoplasm. In terms of biological role, could be a nuclease involved in processing of the 5'-end of pre-16S rRNA. In Legionella pneumophila subsp. pneumophila (strain Philadelphia 1 / ATCC 33152 / DSM 7513), this protein is Putative pre-16S rRNA nuclease.